The following is a 104-amino-acid chain: Ribonuclease P protein component 4 (104 aa).

4 residues coordinate Zn(2+): cysteine 57, cysteine 60, cysteine 83, and cysteine 86.

It belongs to the eukaryotic/archaeal RNase P protein component 4 family. As to quaternary structure, consists of a catalytic RNA component and at least 4-5 protein subunits. It depends on Zn(2+) as a cofactor.

The protein localises to the cytoplasm. The catalysed reaction is Endonucleolytic cleavage of RNA, removing 5'-extranucleotides from tRNA precursor.. Its function is as follows. Part of ribonuclease P, a protein complex that generates mature tRNA molecules by cleaving their 5'-ends. The sequence is that of Ribonuclease P protein component 4 from Saccharolobus islandicus (strain L.S.2.15 / Lassen #1) (Sulfolobus islandicus).